A 593-amino-acid chain; its full sequence is UvrABC system protein C (593 aa).

The region spanning 14–91 (DSPGCYLHKD…IQENMPKYNI (78 aa)) is the GIY-YIG domain. One can recognise a UVR domain in the interval 196 to 231 (NKIVNGLTEKMKSAAMTMEFERAAEYRDLIEAISLL).

Belongs to the UvrC family. In terms of assembly, interacts with UvrB in an incision complex.

Its subcellular location is the cytoplasm. In terms of biological role, the UvrABC repair system catalyzes the recognition and processing of DNA lesions. UvrC both incises the 5' and 3' sides of the lesion. The N-terminal half is responsible for the 3' incision and the C-terminal half is responsible for the 5' incision. The sequence is that of UvrABC system protein C from Streptococcus agalactiae serotype III (strain NEM316).